Here is an 88-residue protein sequence, read N- to C-terminus: MEIQLINIGFGNIVSANRVVAIVSPESAPIKRIITDARDKNQLIDATYGRRTRAVIITDSSHVILSAIQPETVANRFVISREHQSVEN.

It belongs to the RemA family.

This Trichormus variabilis (strain ATCC 29413 / PCC 7937) (Anabaena variabilis) protein is Putative regulatory protein Ava_1474.